The sequence spans 455 residues: Protein png1 (455 aa).

The tract at residues 1–110 (MTDGRQQHTR…LPVFPSPPRD (110 aa)) is disordered. Residues 38 to 53 (SLQEQSRSRSRTQSPS) are compositionally biased toward low complexity. Residues 59 to 73 (HTPPHPSRAPPPPPT) are compositionally biased toward pro residues. The span at 74-98 (GAHYPSSQSPSQQHQQHQLPASSSL) shows a compositional bias: low complexity. Cys199, Cys202, Cys231, and Cys236 together coordinate Zn(2+). Residues 408 to 455 (NLIPREQTSGRPGEQKTPASMQDTPVDWVAAQQMGPGQSGPDRSQDGR) form a disordered region.

It belongs to the transglutaminase-like superfamily. PNGase family.

The protein is Protein png1 (png1) of Aspergillus fumigatus (strain ATCC MYA-4609 / CBS 101355 / FGSC A1100 / Af293) (Neosartorya fumigata).